A 168-amino-acid chain; its full sequence is Short form salivary protein D7R2 (168 aa).

The signal sequence occupies residues 1-21; the sequence is MFKKLLLSVGLVWCLISLGQA. 3 disulfide bridges follow: C30–C62, C43–C168, and C101–C120. 2 residues coordinate noradrenaline: E31 and R46. E31 contacts serotonin. H59, Y118, D135, and E138 together coordinate serotonin. Histamine-binding residues include Y118, D135, and E138. Residues D135 and E138 each coordinate noradrenaline.

It belongs to the PBP/GOBP family. In terms of tissue distribution, female saliva (at protein level). Female salivary gland. Not detected in female carcass without salivary glands. Not detected in male tissues.

It is found in the secreted. Functionally, modulates blood feeding of female mosquitoes on vertebrate species by binding and sequestering different mediators involved in the host response. Binds serotonin, noradrenaline, histamine and adrenaline. Inhibits histamine-, serotonin- and noradrenaline-induced smooth muscle contraction. Exhibits vasodilating activity. In Anopheles gambiae (African malaria mosquito), this protein is Short form salivary protein D7R2.